Here is a 344-residue protein sequence, read N- to C-terminus: Phenylalanine--tRNA ligase alpha subunit (344 aa).

A Mg(2+)-binding site is contributed by E269.

This sequence belongs to the class-II aminoacyl-tRNA synthetase family. Phe-tRNA synthetase alpha subunit type 1 subfamily. In terms of assembly, tetramer of two alpha and two beta subunits. Requires Mg(2+) as cofactor.

The protein localises to the cytoplasm. It carries out the reaction tRNA(Phe) + L-phenylalanine + ATP = L-phenylalanyl-tRNA(Phe) + AMP + diphosphate + H(+). In Ralstonia pickettii (strain 12J), this protein is Phenylalanine--tRNA ligase alpha subunit.